The sequence spans 341 residues: Elongation factor Ts (341 aa).

An involved in Mg(2+) ion dislocation from EF-Tu region spans residues 80 to 83 (TDFV).

Belongs to the EF-Ts family.

The protein localises to the cytoplasm. In terms of biological role, associates with the EF-Tu.GDP complex and induces the exchange of GDP to GTP. It remains bound to the aminoacyl-tRNA.EF-Tu.GTP complex up to the GTP hydrolysis stage on the ribosome. In Lactobacillus johnsonii (strain CNCM I-12250 / La1 / NCC 533), this protein is Elongation factor Ts.